We begin with the raw amino-acid sequence, 373 residues long: Chaperone protein DnaJ (373 aa).

In terms of domain architecture, J spans 4–68; it reads NYYQILGVSK…QTRAAYDRLG (65 aa). The segment at 136–214 adopts a CR-type zinc-finger fold; sequence GIEKNISFSS…CHGMGRYHKQ (79 aa). Zn(2+)-binding residues include Cys-149, Cys-152, Cys-166, Cys-169, Cys-188, Cys-191, Cys-202, and Cys-205. 4 CXXCXGXG motif repeats span residues 149 to 156, 166 to 173, 188 to 195, and 202 to 209; these read CDTCHGSG, CDACSGVG, CHKCQGNG, and CKKCHGMG.

This sequence belongs to the DnaJ family. In terms of assembly, homodimer. The cofactor is Zn(2+).

Its subcellular location is the cytoplasm. Participates actively in the response to hyperosmotic and heat shock by preventing the aggregation of stress-denatured proteins and by disaggregating proteins, also in an autonomous, DnaK-independent fashion. Unfolded proteins bind initially to DnaJ; upon interaction with the DnaJ-bound protein, DnaK hydrolyzes its bound ATP, resulting in the formation of a stable complex. GrpE releases ADP from DnaK; ATP binding to DnaK triggers the release of the substrate protein, thus completing the reaction cycle. Several rounds of ATP-dependent interactions between DnaJ, DnaK and GrpE are required for fully efficient folding. Also involved, together with DnaK and GrpE, in the DNA replication of plasmids through activation of initiation proteins. The polypeptide is Chaperone protein DnaJ (Rickettsia peacockii (strain Rustic)).